A 100-amino-acid chain; its full sequence is Small ribosomal subunit protein uS14c (100 aa).

It belongs to the universal ribosomal protein uS14 family. In terms of assembly, part of the 30S ribosomal subunit.

The protein localises to the plastid. It is found in the cyanelle. Binds 16S rRNA, required for the assembly of 30S particles. The sequence is that of Small ribosomal subunit protein uS14c from Cyanophora paradoxa.